Consider the following 680-residue polypeptide: E3 ubiquitin-protein ligase brl2 (680 aa).

Residues 44–72 (RSIQFDELESKIEGLQNLAEEKLKVLATL) adopt a coiled-coil conformation. The tract at residues 206-233 (PQSTKVKEEATTSSKGKDEEKKVSTVEQ) is disordered. A compositionally biased stretch (basic and acidic residues) spans 210–229 (KVKEEATTSSKGKDEEKKVS). Coiled coils occupy residues 261 to 288 (LDSN…TNLK), 353 to 399 (MQND…ETMV), and 485 to 609 (DSLH…LKDT). The segment at 627 to 667 (CSVCNFERWKDRIISLCGHGFCYQCIQKRIETRQRRCPICG) adopts an RING-type zinc-finger fold.

The protein belongs to the BRE1 family. In terms of assembly, component of the histone H2B ubiquitin ligase complex (HULC) composed of at least brl1, brl2, rhp6 and shf1.

The protein localises to the nucleus. It catalyses the reaction S-ubiquitinyl-[E2 ubiquitin-conjugating enzyme]-L-cysteine + [acceptor protein]-L-lysine = [E2 ubiquitin-conjugating enzyme]-L-cysteine + N(6)-ubiquitinyl-[acceptor protein]-L-lysine.. Its pathway is protein modification; protein ubiquitination. In terms of biological role, E3 ubiquitin-protein ligase which belongs to the histone H2B ubiquitin ligase complex (HULC) which mediates monoubiquitination of histone H2B to form H2BK123ub1. H2BK123ub1 gives a specific tag for epigenetic transcriptional activation and is also a prerequisite for H3K4me and H3K79me formation. The polypeptide is E3 ubiquitin-protein ligase brl2 (brl2) (Schizosaccharomyces pombe (strain 972 / ATCC 24843) (Fission yeast)).